We begin with the raw amino-acid sequence, 240 residues long: Large ribosomal subunit protein uL2 (240 aa).

A compositionally biased stretch (basic residues) spans 1–12 (MGRRIQGQRRGR). 2 disordered regions span residues 1–21 (MGRR…RAPS) and 198–240 (VDHP…GSNK). The segment covering 221–231 (PPGRKVGDIAS) has biased composition (basic and acidic residues).

It belongs to the universal ribosomal protein uL2 family. Part of the 50S ribosomal subunit. Forms a bridge to the 30S subunit in the 70S ribosome.

One of the primary rRNA binding proteins. Required for association of the 30S and 50S subunits to form the 70S ribosome, for tRNA binding and peptide bond formation. It has been suggested to have peptidyltransferase activity; this is somewhat controversial. Makes several contacts with the 16S rRNA in the 70S ribosome. This chain is Large ribosomal subunit protein uL2, found in Halorubrum lacusprofundi (strain ATCC 49239 / DSM 5036 / JCM 8891 / ACAM 34).